A 166-amino-acid chain; its full sequence is Small ribosomal subunit protein uS5 (166 aa).

The S5 DRBM domain maps to 12–75; the sequence is YIEKLVQVNR…EAARRNMIQV (64 aa).

The protein belongs to the universal ribosomal protein uS5 family. In terms of assembly, part of the 30S ribosomal subunit. Contacts proteins S4 and S8.

In terms of biological role, with S4 and S12 plays an important role in translational accuracy. Its function is as follows. Located at the back of the 30S subunit body where it stabilizes the conformation of the head with respect to the body. The sequence is that of Small ribosomal subunit protein uS5 from Pseudomonas savastanoi pv. phaseolicola (strain 1448A / Race 6) (Pseudomonas syringae pv. phaseolicola (strain 1448A / Race 6)).